A 332-amino-acid chain; its full sequence is Glyceraldehyde-3-phosphate dehydrogenase 2 (332 aa).

Residues 11-12 (RI), Asp32, and Arg77 each bind NAD(+). Residues 148 to 150 (SCT), Thr179, 208 to 209 (TG), and Arg231 each bind D-glyceraldehyde 3-phosphate. The Nucleophile role is filled by Cys149. Phosphotyrosine is present on Tyr273. The residue at position 274 (Thr274) is a Phosphothreonine. Asn313 is a binding site for NAD(+).

It belongs to the glyceraldehyde-3-phosphate dehydrogenase family. Homotetramer.

It is found in the cytoplasm. The enzyme catalyses D-glyceraldehyde 3-phosphate + phosphate + NAD(+) = (2R)-3-phospho-glyceroyl phosphate + NADH + H(+). It functions in the pathway carbohydrate degradation; glycolysis; pyruvate from D-glyceraldehyde 3-phosphate: step 1/5. The sequence is that of Glyceraldehyde-3-phosphate dehydrogenase 2 (Gapdh2) from Drosophila melanogaster (Fruit fly).